Reading from the N-terminus, the 65-residue chain is Potassium channel toxin kappa-KTx 2.6 (65 aa).

An N-terminal signal peptide occupies residues 1-27 (MKTSKMICAFLLVLVVGTFNDISGAYG). Positions 28-39 (EYVEDQHSFKIE) are excised as a propeptide. 2 cysteine pairs are disulfide-bonded: Cys-45-Cys-63 and Cys-49-Cys-59.

This sequence belongs to the short scorpion toxin superfamily. Potassium channel inhibitor kappa-KTx family. Kappa-KTx 2 subfamily. In terms of tissue distribution, expressed by the venom gland.

The protein resides in the secreted. Its function is as follows. Potassium channel inhibitor (Kv). The chain is Potassium channel toxin kappa-KTx 2.6 from Opisthacanthus cayaporum (South American scorpion).